A 341-amino-acid polypeptide reads, in one-letter code: S-adenosylmethionine:tRNA ribosyltransferase-isomerase (341 aa).

It belongs to the QueA family. Monomer.

Its subcellular location is the cytoplasm. The catalysed reaction is 7-aminomethyl-7-carbaguanosine(34) in tRNA + S-adenosyl-L-methionine = epoxyqueuosine(34) in tRNA + adenine + L-methionine + 2 H(+). It functions in the pathway tRNA modification; tRNA-queuosine biosynthesis. Functionally, transfers and isomerizes the ribose moiety from AdoMet to the 7-aminomethyl group of 7-deazaguanine (preQ1-tRNA) to give epoxyqueuosine (oQ-tRNA). The protein is S-adenosylmethionine:tRNA ribosyltransferase-isomerase of Clostridium tetani (strain Massachusetts / E88).